Here is a 285-residue protein sequence, read N- to C-terminus: MVQILDGRSVSKKILQEVKDKVAKAGFPVKLATIYNEENEGSKMYVGMKIRRATFAGLISVEYKVDNSWKTDDILRLLSKLNMDSSICGILVQSPLGDGIDESKIFNAIDPLKDADGLSAFNQGLLFENAKENYIVPATPAGVISLLEAYHYQFAAKNALVVGRSVLFGRPMSVLLTNRDMTVTLAHSKTPVDQLRQFAKRADLIVVAIGKANWFQFTDLKKDVVVIDVGANKLNGHATGDVDFEKVYPHVSQISPVPGGVGPMTIATLIKHTFDLAVFQQGEQK.

NADP(+) contacts are provided by residues 163-165 (GRS), serine 188, and alanine 231.

The protein belongs to the tetrahydrofolate dehydrogenase/cyclohydrolase family. As to quaternary structure, homodimer.

It catalyses the reaction (6R)-5,10-methylene-5,6,7,8-tetrahydrofolate + NADP(+) = (6R)-5,10-methenyltetrahydrofolate + NADPH. The enzyme catalyses (6R)-5,10-methenyltetrahydrofolate + H2O = (6R)-10-formyltetrahydrofolate + H(+). The protein operates within one-carbon metabolism; tetrahydrofolate interconversion. Functionally, catalyzes the oxidation of 5,10-methylenetetrahydrofolate to 5,10-methenyltetrahydrofolate and then the hydrolysis of 5,10-methenyltetrahydrofolate to 10-formyltetrahydrofolate. The polypeptide is Bifunctional protein FolD (Oenococcus oeni (strain ATCC BAA-331 / PSU-1)).